We begin with the raw amino-acid sequence, 186 residues long: Biphenyl dioxygenase subunit beta (186 aa).

This sequence belongs to the bacterial ring-hydroxylating dioxygenase beta subunit family. As to quaternary structure, heterohexamer consisting of 3 BphA subunits and 3 BphE subunits. A ferredoxin (BphF) and a ferredoxin reductase (BphG) must be present to obtain activity.

It catalyses the reaction biphenyl + NADH + O2 + H(+) = (2R,3S)-3-phenylcyclohexa-3,5-diene-1,2-diol + NAD(+). It participates in xenobiotic degradation; biphenyl degradation; 2-hydroxy-2,4-pentadienoate and benzoate from biphenyl: step 1/4. The beta subunit may be responsible for the substrate specificity of the enzyme. The polypeptide is Biphenyl dioxygenase subunit beta (bphE) (Comamonas testosteroni (Pseudomonas testosteroni)).